The following is a 325-amino-acid chain: MLKAPRFWYQPRSLLGGILSPFSFLYQIIVRIRRGLYAVGLKKISKFPVSIVIVGNITVGGSGKTPFVIWLANELKNRGFRPGVVSRGYGGKANRFPQTVTENSDPLQVGDEAVLLMKKIDCPMVVCRDRGAAVKHLLRNFQCDVVIGDDGLQHYSLGRDLEIALLDDRHLGNGRCLPAGPLREPKSRLNTVDFVVPKQLRPNEIYQLKNPAKKIDFNELKELTVHAVAGIGNPGYFFKQLETLGANVIAHPFRDHYFYRSEDFNFDDDHLIILTEKDAIKCKQFDDERLFCFSVDAVVPDQFQNDFFRLISNIILRKQAQREGI.

58–65 (TVGGSGKT) serves as a coordination point for ATP.

Belongs to the LpxK family.

It catalyses the reaction a lipid A disaccharide + ATP = a lipid IVA + ADP + H(+). It participates in glycolipid biosynthesis; lipid IV(A) biosynthesis; lipid IV(A) from (3R)-3-hydroxytetradecanoyl-[acyl-carrier-protein] and UDP-N-acetyl-alpha-D-glucosamine: step 6/6. Transfers the gamma-phosphate of ATP to the 4'-position of a tetraacyldisaccharide 1-phosphate intermediate (termed DS-1-P) to form tetraacyldisaccharide 1,4'-bis-phosphate (lipid IVA). This Coxiella burnetii (strain CbuG_Q212) (Coxiella burnetii (strain Q212)) protein is Tetraacyldisaccharide 4'-kinase.